Here is a 559-residue protein sequence, read N- to C-terminus: Chaperonin GroEL 1 (559 aa).

Residues 29-32 (TIGP), 86-90 (DGTTT), Gly-413, 476-478 (NAL), and Asp-492 each bind ATP. The disordered stretch occupies residues 521–541 (KPEPPAPAPAGDGDPMGGMGG).

It belongs to the chaperonin (HSP60) family. Forms a cylinder of 14 subunits composed of two heptameric rings stacked back-to-back. Interacts with the co-chaperonin GroES.

The protein resides in the cytoplasm. It carries out the reaction ATP + H2O + a folded polypeptide = ADP + phosphate + an unfolded polypeptide.. Its function is as follows. Together with its co-chaperonin GroES, plays an essential role in assisting protein folding. The GroEL-GroES system forms a nano-cage that allows encapsulation of the non-native substrate proteins and provides a physical environment optimized to promote and accelerate protein folding. The polypeptide is Chaperonin GroEL 1 (Synechococcus sp. (strain CC9605)).